We begin with the raw amino-acid sequence, 534 residues long: Peptide chain release factor 3 (534 aa).

The 270-residue stretch at 9–278 (ARRRTFAIIS…FFVEHAPPPQ (270 aa)) folds into the tr-type G domain. GTP contacts are provided by residues 18 to 25 (SHPDAGKT), 86 to 90 (DTPGH), and 140 to 143 (NKLD).

Belongs to the TRAFAC class translation factor GTPase superfamily. Classic translation factor GTPase family. PrfC subfamily.

Its subcellular location is the cytoplasm. In terms of biological role, increases the formation of ribosomal termination complexes and stimulates activities of RF-1 and RF-2. It binds guanine nucleotides and has strong preference for UGA stop codons. It may interact directly with the ribosome. The stimulation of RF-1 and RF-2 is significantly reduced by GTP and GDP, but not by GMP. This is Peptide chain release factor 3 from Xanthomonas axonopodis pv. citri (strain 306).